Consider the following 507-residue polypeptide: Protein MosB (507 aa).

Residues 256–275 (QAHGALYKGQHVGLLSDIGC) constitute a DNA-binding region (H-T-H motif). Residue lysine 282 is modified to N6-(pyridoxal phosphate)lysine.

The protein belongs to the DegT/DnrJ/EryC1 family.

In terms of biological role, involved in the biosynthesis of the rhizopine 3-O-methyl-scyllo-inosamine. May have a regulatory role in controlling the housekeeping genes within the nodule which are involved in the biosynthesis of the rhizopine backbone. The polypeptide is Protein MosB (mosB) (Rhizobium meliloti (Ensifer meliloti)).